Reading from the N-terminus, the 230-residue chain is N-(5'-phosphoribosyl)anthranilate isomerase (230 aa).

The protein belongs to the TrpF family.

It catalyses the reaction N-(5-phospho-beta-D-ribosyl)anthranilate = 1-(2-carboxyphenylamino)-1-deoxy-D-ribulose 5-phosphate. It participates in amino-acid biosynthesis; L-tryptophan biosynthesis; L-tryptophan from chorismate: step 3/5. The polypeptide is N-(5'-phosphoribosyl)anthranilate isomerase (Syntrophus aciditrophicus (strain SB)).